A 278-amino-acid chain; its full sequence is 4-deoxy-L-threo-5-hexosulose-uronate ketol-isomerase (278 aa).

Residues His196, His198, Glu203, and His245 each contribute to the Zn(2+) site.

Belongs to the KduI family. Zn(2+) is required as a cofactor.

The catalysed reaction is 5-dehydro-4-deoxy-D-glucuronate = 3-deoxy-D-glycero-2,5-hexodiulosonate. The protein operates within glycan metabolism; pectin degradation; 2-dehydro-3-deoxy-D-gluconate from pectin: step 4/5. Catalyzes the isomerization of 5-dehydro-4-deoxy-D-glucuronate to 3-deoxy-D-glycero-2,5-hexodiulosonate. The chain is 4-deoxy-L-threo-5-hexosulose-uronate ketol-isomerase from Shigella sonnei (strain Ss046).